Here is a 692-residue protein sequence, read N- to C-terminus: Elongation factor G (692 aa).

The region spanning 8–282 (EKTRNIGIMA…AVLDYLPAPT (275 aa)) is the tr-type G domain. GTP-binding positions include 17–24 (AHIDAGKT), 81–85 (DTPGH), and 135–138 (NKMD). Ser213, Ser302, Ser569, and Ser680 each carry phosphoserine.

Belongs to the TRAFAC class translation factor GTPase superfamily. Classic translation factor GTPase family. EF-G/EF-2 subfamily. Post-translationally, phosphorylated on threonine residue(s). Phosphorylated by PrkC and dephosphorylated by PrpC, in vitro.

The protein resides in the cytoplasm. Its function is as follows. Catalyzes the GTP-dependent ribosomal translocation step during translation elongation. During this step, the ribosome changes from the pre-translocational (PRE) to the post-translocational (POST) state as the newly formed A-site-bound peptidyl-tRNA and P-site-bound deacylated tRNA move to the P and E sites, respectively. Catalyzes the coordinated movement of the two tRNA molecules, the mRNA and conformational changes in the ribosome. The chain is Elongation factor G (fusA) from Bacillus subtilis (strain 168).